The chain runs to 324 residues: Acetaldehyde dehydrogenase 1 (324 aa).

An NAD(+)-binding site is contributed by serine 18 to isoleucine 21. Residue cysteine 136 is the Acyl-thioester intermediate of the active site. NAD(+) is bound by residues serine 167–asparagine 175 and asparagine 297.

The protein belongs to the acetaldehyde dehydrogenase family.

It carries out the reaction acetaldehyde + NAD(+) + CoA = acetyl-CoA + NADH + H(+). In Parafrankia sp. (strain EAN1pec), this protein is Acetaldehyde dehydrogenase 1.